We begin with the raw amino-acid sequence, 140 residues long: Ribosome-binding factor A (140 aa).

Positions 1–13 are enriched in basic residues; the sequence is MQKKSSSKSHRAT. Positions 1 to 22 are disordered; the sequence is MQKKSSSKSHRATRGPSQRQLR.

This sequence belongs to the RbfA family. In terms of assembly, monomer. Binds 30S ribosomal subunits, but not 50S ribosomal subunits or 70S ribosomes.

The protein localises to the cytoplasm. In terms of biological role, one of several proteins that assist in the late maturation steps of the functional core of the 30S ribosomal subunit. Associates with free 30S ribosomal subunits (but not with 30S subunits that are part of 70S ribosomes or polysomes). Required for efficient processing of 16S rRNA. May interact with the 5'-terminal helix region of 16S rRNA. The protein is Ribosome-binding factor A of Parvibaculum lavamentivorans (strain DS-1 / DSM 13023 / NCIMB 13966).